The following is a 208-amino-acid chain: Uracil phosphoribosyltransferase (208 aa).

5-phospho-alpha-D-ribose 1-diphosphate is bound by residues Arg-78, Arg-103, and 130–138 (DPMLATGGS). Uracil is bound by residues Ile-193 and 198–200 (GDA). Asp-199 lines the 5-phospho-alpha-D-ribose 1-diphosphate pocket.

Belongs to the UPRTase family. Mg(2+) is required as a cofactor.

It carries out the reaction UMP + diphosphate = 5-phospho-alpha-D-ribose 1-diphosphate + uracil. Its pathway is pyrimidine metabolism; UMP biosynthesis via salvage pathway; UMP from uracil: step 1/1. Allosterically activated by GTP. Catalyzes the conversion of uracil and 5-phospho-alpha-D-ribose 1-diphosphate (PRPP) to UMP and diphosphate. The chain is Uracil phosphoribosyltransferase from Shewanella woodyi (strain ATCC 51908 / MS32).